The chain runs to 137 residues: Large ribosomal subunit protein uL16 (137 aa).

The protein belongs to the universal ribosomal protein uL16 family. Part of the 50S ribosomal subunit.

Its function is as follows. Binds 23S rRNA and is also seen to make contacts with the A and possibly P site tRNAs. This is Large ribosomal subunit protein uL16 from Paracoccus denitrificans (strain Pd 1222).